The sequence spans 67 residues: Neurotoxin Cex9 (67 aa).

Positions 1 to 65 (KDGYPVEVTG…TWPLPNKSCG (65 aa)) constitute an LCN-type CS-alpha/beta domain. Cystine bridges form between cysteine 11-cysteine 64, cysteine 15-cysteine 40, cysteine 24-cysteine 45, and cysteine 28-cysteine 47. Position 64 is a cysteine amide (cysteine 64). Positions 65 to 67 (GKK) are excised as a propeptide.

The protein belongs to the long (4 C-C) scorpion toxin superfamily. Sodium channel inhibitor family. Beta subfamily. Expressed by the venom gland.

It localises to the secreted. Beta toxins bind voltage-independently at site-4 of sodium channels (Nav) and shift the voltage of activation toward more negative potentials thereby affecting sodium channel activation and promoting spontaneous and repetitive firing. The polypeptide is Neurotoxin Cex9 (Centruroides exilicauda (Bark scorpion)).